We begin with the raw amino-acid sequence, 198 residues long: MAASLVGKKIVFVTGNAKKLEEVIQILGDNFPCTLEAQKIDLPEYQGEPDEISIQKCREAARQVQGPVLVEDTCLCFNALGGLPGPYIKWFLQKLKPEGLHQLLAGFEDKSAYALCTFALSTGDPSQPVLLFRGQTSGQIVMPRGSRDFGWDPCFQPDGYEQTYAEMPKSEKNTISHRFRALHKLQEYFSVAAGAGDH.

Alanine 2 is modified (N-acetylalanine). Residue 14-19 participates in ITP binding; it reads TGNAKK. Glutamate 44 provides a ligand contact to Mg(2+). Residues lysine 56, 72 to 73, and lysine 89 contribute to the ITP site; that span reads DT. At serine 146 the chain carries Phosphoserine. ITP contacts are provided by residues 149–152, lysine 172, and 177–178; these read FGWD and HR.

The protein belongs to the HAM1 NTPase family. Homodimer. It depends on Mg(2+) as a cofactor. Requires Mn(2+) as cofactor.

It localises to the cytoplasm. It carries out the reaction ITP + H2O = IMP + diphosphate + H(+). The enzyme catalyses dITP + H2O = dIMP + diphosphate + H(+). The catalysed reaction is XTP + H2O = XMP + diphosphate + H(+). It catalyses the reaction N(6)-hydroxy-dATP + H2O = N(6)-hydroxy-dAMP + diphosphate + H(+). Functionally, pyrophosphatase that hydrolyzes the non-canonical purine nucleotides inosine triphosphate (ITP), deoxyinosine triphosphate (dITP) as well as 2'-deoxy-N-6-hydroxylaminopurine triphosphate (dHAPTP) and xanthosine 5'-triphosphate (XTP) to their respective monophosphate derivatives. The enzyme does not distinguish between the deoxy- and ribose forms. Probably excludes non-canonical purines from RNA and DNA precursor pools, thus preventing their incorporation into RNA and DNA and avoiding chromosomal lesions. In Mus musculus (Mouse), this protein is Inosine triphosphate pyrophosphatase (Itpa).